The primary structure comprises 218 residues: Protein-L-isoaspartate O-methyltransferase (218 aa).

Residue Ser63 is part of the active site.

It belongs to the methyltransferase superfamily. L-isoaspartyl/D-aspartyl protein methyltransferase family.

It localises to the cytoplasm. The enzyme catalyses [protein]-L-isoaspartate + S-adenosyl-L-methionine = [protein]-L-isoaspartate alpha-methyl ester + S-adenosyl-L-homocysteine. Its function is as follows. Catalyzes the methyl esterification of L-isoaspartyl residues in peptides and proteins that result from spontaneous decomposition of normal L-aspartyl and L-asparaginyl residues. It plays a role in the repair and/or degradation of damaged proteins. The protein is Protein-L-isoaspartate O-methyltransferase of Syntrophus aciditrophicus (strain SB).